Reading from the N-terminus, the 126-residue chain is Fluoride-specific ion channel FluC (126 aa).

The next 4 membrane-spanning stretches (helical) occupy residues 9 to 29 (LAVF…GFQL), 35 to 55 (LTAT…LYAI), 63 to 83 (LLHL…SFVL), and 94 to 114 (WSIG…AAIL). The Na(+) site is built by Gly-73 and Ser-76.

This sequence belongs to the fluoride channel Fluc/FEX (TC 1.A.43) family.

It is found in the cell inner membrane. It catalyses the reaction fluoride(in) = fluoride(out). Its activity is regulated as follows. Na(+) is not transported, but it plays an essential structural role and its presence is essential for fluoride channel function. Fluoride-specific ion channel. Important for reducing fluoride concentration in the cell, thus reducing its toxicity. In Ruegeria pomeroyi (strain ATCC 700808 / DSM 15171 / DSS-3) (Silicibacter pomeroyi), this protein is Fluoride-specific ion channel FluC.